A 437-amino-acid chain; its full sequence is Vacuolar cation/proton exchanger 2 (437 aa).

Positions 1-29 (MMGAEKAEGMEELELEEGGGSPSPSPMTA) are disordered. Over 1-65 (MMGAEKAEGM…KWRRALTSVR (65 aa)) the chain is Cytoplasmic. Residues 66–86 (VVILQAKINVLLPFGPLAVML) form a helical membrane-spanning segment. Residues 87 to 88 (HY) lie on the Extracellular side of the membrane. Residues 89-109 (LSANHQGWVFLFSLIGITPLA) form a helical membrane-spanning segment. Residues 110–126 (ERLGYATEQLALYTGPT) lie on the Cytoplasmic side of the membrane. The chain crosses the membrane as a helical span at residues 127-147 (IGGLLNATFGNATEMIISLYA). Residues 136–171 (GNATEMIISLYALKNGMIRVVQQSLLGSILSNMLLV) are cation selection. Residues 148–161 (LKNGMIRVVQQSLL) lie on the Extracellular side of the membrane. The helical transmembrane segment at 162–182 (GSILSNMLLVLGCAFFAGGLV) threads the bilayer. The Cytoplasmic portion of the chain corresponds to 183–194 (HPSRDQVFNKAS). The helical transmembrane segment at 195–215 (AVVNSGLLLMAVLGLMFPAVL) threads the bilayer. The Extracellular segment spans residues 216 to 228 (HFTHSEVQYGKSE). Residues 229 to 249 (VSLSRFSSCIMLVAYASYLFF) traverse the membrane as a helical segment. Residues 250–281 (QLKSQRSLYSPIGEQEEEVTEDEEEEKEITQG) are Cytoplasmic-facing. Residues 282 to 302 (EAICWLFVLTIWISILSGYLV) traverse the membrane as a helical segment. The Extracellular portion of the chain corresponds to 303–310 (DAIQGASE). Residues 311-331 (SLNMPVAFISVILLPIVGNAA) form a helical membrane-spanning segment. The cation selection stretch occupies residues 328-363 (GNAAEHASAIMFAMKDKLDITLGVAIGSSTQISMFV). Topologically, residues 332 to 352 (EHASAIMFAMKDKLDITLGVA) are cytoplasmic. The helical transmembrane segment at 353-373 (IGSSTQISMFVIPFCVVIGWI) threads the bilayer. Residues 374 to 379 (MGQQMD) are Extracellular-facing. A helical transmembrane segment spans residues 380-400 (LNFQLFETATLFITVLVVAFM). Residues 401–408 (LQEGTSNY) are Cytoplasmic-facing. A helical membrane pass occupies residues 409–429 (FKGLMLILCYLIVAASFFVHV). Topologically, residues 430–437 (DPDSSNNK) are extracellular.

The protein belongs to the Ca(2+):cation antiporter (CaCA) (TC 2.A.19) family. Cation/proton exchanger (CAX) subfamily. Expressed in roots and shoots.

It localises to the vacuole membrane. Functionally, vacuolar cation/proton exchanger (CAX). Translocates Ca(2+) and other metal ions into vacuoles using the proton gradient formed by H(+)-ATPase and H(+)-pyrophosphatase. The polypeptide is Vacuolar cation/proton exchanger 2 (CAX2) (Oryza sativa subsp. japonica (Rice)).